Consider the following 1649-residue polypeptide: Cortactin-binding protein 2 (1649 aa).

The disordered stretch occupies residues 1-27 (MATDSASCEPDLSRAPGDAEGATAEAA). The span at 15–25 (APGDAEGATAE) shows a compositional bias: low complexity. A coiled-coil region spans residues 118–275 (RKMQERMSAQ…EQMKKGNDGK (158 aa)). Disordered stretches follow at residues 322–439 (PLSV…PGLN), 451–476 (GNANDPDQNGNNTQSPPSRDVSPTSR), and 492–604 (ALSR…LPPK). Residues 330-342 (STGSPLVSTNTKG) are compositionally biased toward polar residues. A compositionally biased stretch (low complexity) spans 395 to 416 (STPSTPSGTAPAAAQTLGAAPQ). Over residues 492–503 (ALSRFTSPQAGA) the composition is skewed to polar residues. Arginine 495 bears the Asymmetric dimethylarginine mark. ANK repeat units follow at residues 699–729 (GRPTLLQQAAAQGNVTLLSMLLNEEGLDINY), 733–762 (DSHSALYSAAKNGHTDCVRLLLNAEARVDA), 766–795 (NGFTPLCVAAAQGHFECIELLTAYNANINH), 799–828 (GGQTPLYLACKTGNKECIKLLLEAGTDRSI), 832–861 (DGWTPIHAAVDTGNVDSLKLLMYHRVPAPG), and 901–931 (EGWTAAHIAASKGFKNCLEILCRHGGLEPER). Residues 1438–1471 (SAAWRKVNTSPRKKPGHFSSPMWNKPDLKHEGMR) are disordered. Phosphoserine is present on serine 1510. The disordered stretch occupies residues 1527-1649 (KSESDISKIA…KHEHVEKRNK (123 aa)). Residues 1528 to 1546 (SESDISKIADSREDLRTFD) show a composition bias toward basic and acidic residues. Polar residues-rich tracts occupy residues 1547–1557 (SSRTNPVTSAP), 1571–1584 (PLSSHQTTECSNSK), and 1621–1630 (NTRQLEINNN). The span at 1631–1649 (SKEENWNVDKHEHVEKRNK) shows a compositional bias: basic and acidic residues.

As to quaternary structure, interacts with CTTN/cortactin SH3 domain. Interacts with STRN, STRN4/zinedin and MOB4/phocein; this interactions mediate the association with the STRIPAK core complex and may regulate dendritic spine distribution of the STRIPAK complex in hippocampal neurons. Activation of glutamate receptors weakens the interaction with STRN and STRN4.

The protein localises to the cytoplasm. The protein resides in the cell cortex. Its subcellular location is the cell projection. It localises to the dendritic spine. Its function is as follows. Regulates the dendritic spine distribution of CTTN/cortactin in hippocampal neurons, and thus controls dendritic spinogenesis and dendritic spine maintenance. Associates with the striatin-interacting phosphatase and kinase (STRIPAK) core complex to regulate dendritic spine distribution of the STRIPAK complex in hippocampal neurons. This is Cortactin-binding protein 2 (Cttnbp2) from Rattus norvegicus (Rat).